The primary structure comprises 311 residues: Methionyl-tRNA formyltransferase (311 aa).

109–112 (SLLP) lines the (6S)-5,6,7,8-tetrahydrofolate pocket.

The protein belongs to the Fmt family.

It catalyses the reaction L-methionyl-tRNA(fMet) + (6R)-10-formyltetrahydrofolate = N-formyl-L-methionyl-tRNA(fMet) + (6S)-5,6,7,8-tetrahydrofolate + H(+). Functionally, attaches a formyl group to the free amino group of methionyl-tRNA(fMet). The formyl group appears to play a dual role in the initiator identity of N-formylmethionyl-tRNA by promoting its recognition by IF2 and preventing the misappropriation of this tRNA by the elongation apparatus. This chain is Methionyl-tRNA formyltransferase, found in Staphylococcus aureus (strain MW2).